The primary structure comprises 386 residues: LL-diaminopimelate aminotransferase (386 aa).

Substrate is bound by residues Tyr13 and Gly38. Residues Tyr67, 101-102 (SK), Tyr126, Asn176, Tyr207, and 235-237 (SLS) contribute to the pyridoxal 5'-phosphate site. Positions 102, 126, and 176 each coordinate substrate. N6-(pyridoxal phosphate)lysine is present on Lys238. Position 246 (Arg246) interacts with pyridoxal 5'-phosphate. Arg364 serves as a coordination point for substrate.

This sequence belongs to the class-I pyridoxal-phosphate-dependent aminotransferase family. LL-diaminopimelate aminotransferase subfamily. As to quaternary structure, homodimer. Pyridoxal 5'-phosphate is required as a cofactor.

The catalysed reaction is (2S,6S)-2,6-diaminopimelate + 2-oxoglutarate = (S)-2,3,4,5-tetrahydrodipicolinate + L-glutamate + H2O + H(+). It participates in amino-acid biosynthesis; L-lysine biosynthesis via DAP pathway; LL-2,6-diaminopimelate from (S)-tetrahydrodipicolinate (aminotransferase route): step 1/1. Involved in the synthesis of meso-diaminopimelate (m-DAP or DL-DAP), required for both lysine and peptidoglycan biosynthesis. Catalyzes the direct conversion of tetrahydrodipicolinate to LL-diaminopimelate. This Natranaerobius thermophilus (strain ATCC BAA-1301 / DSM 18059 / JW/NM-WN-LF) protein is LL-diaminopimelate aminotransferase.